The chain runs to 158 residues: NADPH-dependent 7-cyano-7-deazaguanine reductase (158 aa).

Cysteine 56 acts as the Thioimide intermediate in catalysis. The Proton donor role is filled by aspartate 63. Substrate is bound by residues 78–80 (LES) and 97–98 (HE).

Belongs to the GTP cyclohydrolase I family. QueF type 1 subfamily.

The protein localises to the cytoplasm. It catalyses the reaction 7-aminomethyl-7-carbaguanine + 2 NADP(+) = 7-cyano-7-deazaguanine + 2 NADPH + 3 H(+). It functions in the pathway tRNA modification; tRNA-queuosine biosynthesis. In terms of biological role, catalyzes the NADPH-dependent reduction of 7-cyano-7-deazaguanine (preQ0) to 7-aminomethyl-7-deazaguanine (preQ1). The chain is NADPH-dependent 7-cyano-7-deazaguanine reductase from Rhodopseudomonas palustris (strain TIE-1).